Here is a 473-residue protein sequence, read N- to C-terminus: Glutamate--tRNA ligase (473 aa).

The 'HIGH' region signature appears at 11 to 21 (PSPTGFLHIGG). Positions 240-244 (KLSKR) match the 'KMSKS' region motif. Lys-243 is a binding site for ATP.

The protein belongs to the class-I aminoacyl-tRNA synthetase family. Glutamate--tRNA ligase type 1 subfamily. As to quaternary structure, monomer.

It is found in the cytoplasm. The enzyme catalyses tRNA(Glu) + L-glutamate + ATP = L-glutamyl-tRNA(Glu) + AMP + diphosphate. Its function is as follows. Catalyzes the attachment of glutamate to tRNA(Glu) in a two-step reaction: glutamate is first activated by ATP to form Glu-AMP and then transferred to the acceptor end of tRNA(Glu). In Rhodopseudomonas palustris (strain TIE-1), this protein is Glutamate--tRNA ligase.